The chain runs to 340 residues: UDP-3-O-acylglucosamine N-acyltransferase (340 aa).

The Proton acceptor role is filled by H238.

This sequence belongs to the transferase hexapeptide repeat family. LpxD subfamily. As to quaternary structure, homotrimer.

The enzyme catalyses a UDP-3-O-[(3R)-3-hydroxyacyl]-alpha-D-glucosamine + a (3R)-hydroxyacyl-[ACP] = a UDP-2-N,3-O-bis[(3R)-3-hydroxyacyl]-alpha-D-glucosamine + holo-[ACP] + H(+). It participates in bacterial outer membrane biogenesis; LPS lipid A biosynthesis. Catalyzes the N-acylation of UDP-3-O-acylglucosamine using 3-hydroxyacyl-ACP as the acyl donor. Is involved in the biosynthesis of lipid A, a phosphorylated glycolipid that anchors the lipopolysaccharide to the outer membrane of the cell. In Shewanella denitrificans (strain OS217 / ATCC BAA-1090 / DSM 15013), this protein is UDP-3-O-acylglucosamine N-acyltransferase.